The primary structure comprises 468 residues: Ribulose bisphosphate carboxylase large chain (468 aa).

Position 5 is an N6,N6,N6-trimethyllysine (Lys5). 2 residues coordinate substrate: Asn114 and Thr164. Lys166 acts as the Proton acceptor in catalysis. A substrate-binding site is contributed by Lys168. Residues Lys192, Asp194, and Glu195 each contribute to the Mg(2+) site. Lys192 is subject to N6-carboxylysine. The active-site Proton acceptor is the His285. Substrate is bound by residues Arg286, His318, and Ser370.

The protein belongs to the RuBisCO large chain family. Type I subfamily. In terms of assembly, heterohexadecamer of 8 large chains and 8 small chains; disulfide-linked. The disulfide link is formed within the large subunit homodimers. Mg(2+) serves as cofactor. In terms of processing, the disulfide bond which can form in the large chain dimeric partners within the hexadecamer appears to be associated with oxidative stress and protein turnover.

It is found in the plastid. It localises to the chloroplast. It catalyses the reaction 2 (2R)-3-phosphoglycerate + 2 H(+) = D-ribulose 1,5-bisphosphate + CO2 + H2O. The catalysed reaction is D-ribulose 1,5-bisphosphate + O2 = 2-phosphoglycolate + (2R)-3-phosphoglycerate + 2 H(+). Functionally, ruBisCO catalyzes two reactions: the carboxylation of D-ribulose 1,5-bisphosphate, the primary event in carbon dioxide fixation, as well as the oxidative fragmentation of the pentose substrate in the photorespiration process. Both reactions occur simultaneously and in competition at the same active site. This chain is Ribulose bisphosphate carboxylase large chain, found in Tecoma stans (Yellow bells).